We begin with the raw amino-acid sequence, 172 residues long: Adenine phosphoribosyltransferase (172 aa).

The protein belongs to the purine/pyrimidine phosphoribosyltransferase family. Homodimer.

Its subcellular location is the cytoplasm. The enzyme catalyses AMP + diphosphate = 5-phospho-alpha-D-ribose 1-diphosphate + adenine. It functions in the pathway purine metabolism; AMP biosynthesis via salvage pathway; AMP from adenine: step 1/1. Functionally, catalyzes a salvage reaction resulting in the formation of AMP, that is energically less costly than de novo synthesis. The protein is Adenine phosphoribosyltransferase of Prochlorococcus marinus (strain MIT 9211).